A 425-amino-acid polypeptide reads, in one-letter code: Glutamate-1-semialdehyde 2,1-aminomutase (425 aa).

An N6-(pyridoxal phosphate)lysine modification is found at K265.

The protein belongs to the class-III pyridoxal-phosphate-dependent aminotransferase family. HemL subfamily. In terms of assembly, homodimer. The cofactor is pyridoxal 5'-phosphate.

The protein resides in the cytoplasm. It catalyses the reaction (S)-4-amino-5-oxopentanoate = 5-aminolevulinate. The protein operates within porphyrin-containing compound metabolism; protoporphyrin-IX biosynthesis; 5-aminolevulinate from L-glutamyl-tRNA(Glu): step 2/2. This is Glutamate-1-semialdehyde 2,1-aminomutase from Desulfatibacillum aliphaticivorans.